Here is a 203-residue protein sequence, read N- to C-terminus: Ras-related protein Rab-13 (203 aa).

Residues Ser17, Gly18, Gly20, Lys21, Thr22, Cys23, and Thr40 each coordinate GTP. Thr22 contributes to the Mg(2+) binding site. The Switch 1 motif lies at 31–45 (DSFNNTYISTIGIDF). Thr40 contacts Mg(2+). Glycyl lysine isopeptide (Lys-Gly) (interchain with G-Cter in ubiquitin) cross-links involve residues Lys46 and Lys58. A Mg(2+)-binding site is contributed by Asp63. Residues 63–80 (DTAGQERFKTITTAYYRG) carry the Switch 2 motif. Residues Gly66, Asn121, Lys122, Asp124, Ala152, and Lys153 each contribute to the GTP site. The disordered stretch occupies residues 173–203 (SGGRRSGNSHKAPGTDLKPCDKKNTSKCSLG). Ser178 is subject to Phosphoserine. Cys200 carries the post-translational modification Cysteine methyl ester. Cys200 carries S-geranylgeranyl cysteine lipidation. Residues 201–203 (SLG) constitute a propeptide, removed in mature form.

Belongs to the small GTPase superfamily. Rab family. In terms of assembly, interacts (GTP-bound form) with MICALL2; competes with RAB8A and is involved in tight junctions assembly. Interacts (GTP-bound form) with MICALL1. Interacts (GTP-bound form) with MICAL1, MICAL3, MICALCL, EHBP1 and EHBP1L1; ternary complexes of RAB8A, RAB13 and either MICAL1 or EHBP1L1 are possible. Interacts with PRKACA; downstream effector of RAB13 involved in tight junction assembly. Interacts with GRB2; may recruit RAB13 to the leading edge of migrating endothelial cells where it can activate RHOA. Interacts (isoprenylated form) with PDE6D; dissociates RAB13 from membranes. Interacts with BICDL2/BICDR2. Interacts with LEPROT and LEPROTL1. It depends on Mg(2+) as a cofactor. Post-translationally, ubiquitinated via 'Lys-11'-linked ubiquitination on Lys-46 and Lys-58; impairing the recruitment of guanosine diphosphate (GDP) dissociation inhibitor 1/GDI1.

It is found in the cell membrane. The protein localises to the cytoplasmic vesicle membrane. The protein resides in the cell junction. Its subcellular location is the tight junction. It localises to the golgi apparatus. It is found in the trans-Golgi network membrane. The protein localises to the recycling endosome membrane. The protein resides in the cell projection. Its subcellular location is the lamellipodium. It catalyses the reaction GTP + H2O = GDP + phosphate + H(+). Regulated by guanine nucleotide exchange factors (GEFs) including DENND1C, which promote the exchange of bound GDP for free GTP. Regulated by GTPase activating proteins (GAPs) which increase the GTP hydrolysis activity. Inhibited by GDP dissociation inhibitors (GDIs). Activated in response to insulin. Its function is as follows. The small GTPases Rab are key regulators of intracellular membrane trafficking, from the formation of transport vesicles to their fusion with membranes. Rabs cycle between an inactive GDP-bound form and an active GTP-bound form that is able to recruit to membranes different sets of downstream effectors directly responsible for vesicle formation, movement, tethering and fusion. RAB13 is involved in endocytic recycling and regulates the transport to the plasma membrane of transmembrane proteins like the tight junction protein OCLN/occludin. Thereby, it regulates the assembly and the activity of tight junctions. Moreover, it may also regulate tight junction assembly by activating the PKA signaling pathway and by reorganizing the actin cytoskeleton through the activation of the downstream effectors PRKACA and MICALL2 respectively. Through its role in tight junction assembly, may play a role in the establishment of Sertoli cell barrier. Plays also a role in angiogenesis through regulation of endothelial cells chemotaxis. Also involved in neurite outgrowth. Has also been proposed to play a role in post-Golgi membrane trafficking from the TGN to the recycling endosome. Finally, it has been involved in insulin-induced transport to the plasma membrane of the glucose transporter GLUT4 and therefore may play a role in glucose homeostasis. The protein is Ras-related protein Rab-13 (RAB13) of Canis lupus familiaris (Dog).